The primary structure comprises 463 residues: Carnosine N-methyltransferase (463 aa).

2 disordered regions span residues 1-64 (MTKN…SQLK) and 79-104 (KHNH…EKEE). Residues 9 to 58 (KSNNSNISNNNNNNNNNNNNNNNNNNNNNNNNNNNNNNNNNNNNNNNNKN) show a composition bias toward low complexity. Basic and acidic residues predominate over residues 79–93 (KHNHDHSHDHNHDYD). Residues 94 to 103 (DNNEDDEEKE) are compositionally biased toward acidic residues. S-adenosyl-L-methionine is bound by residues glutamine 215, arginine 218, glycine 260, glutamate 281, aspartate 351, phenylalanine 352, and cysteine 367. Aspartate 371 lines the carnosine pocket. Tyrosine 379 contacts S-adenosyl-L-methionine. Positions 402 and 450 each coordinate carnosine.

Belongs to the carnosine N-methyltransferase family.

It catalyses the reaction carnosine + S-adenosyl-L-methionine = anserine + S-adenosyl-L-homocysteine + H(+). Functionally, N-methyltransferase that mediates the formation of anserine (beta-alanyl-N(Pi)-methyl-L-histidine) from carnosine. This Dictyostelium discoideum (Social amoeba) protein is Carnosine N-methyltransferase.